The chain runs to 267 residues: Acyl-[acyl-carrier-protein]--UDP-N-acetylglucosamine O-acyltransferase (267 aa).

It belongs to the transferase hexapeptide repeat family. LpxA subfamily. Homotrimer.

The protein resides in the cytoplasm. The enzyme catalyses a (3R)-hydroxyacyl-[ACP] + UDP-N-acetyl-alpha-D-glucosamine = a UDP-3-O-[(3R)-3-hydroxyacyl]-N-acetyl-alpha-D-glucosamine + holo-[ACP]. It participates in glycolipid biosynthesis; lipid IV(A) biosynthesis; lipid IV(A) from (3R)-3-hydroxytetradecanoyl-[acyl-carrier-protein] and UDP-N-acetyl-alpha-D-glucosamine: step 1/6. Its function is as follows. Involved in the biosynthesis of lipid A, a phosphorylated glycolipid that anchors the lipopolysaccharide to the outer membrane of the cell. This Cupriavidus pinatubonensis (strain JMP 134 / LMG 1197) (Cupriavidus necator (strain JMP 134)) protein is Acyl-[acyl-carrier-protein]--UDP-N-acetylglucosamine O-acyltransferase.